The chain runs to 519 residues: 2,3-bisphosphoglycerate-independent phosphoglycerate mutase (519 aa).

Mn(2+) contacts are provided by Asp18 and Ser68. Ser68 serves as the catalytic Phosphoserine intermediate. Residues His129, 159–160, Arg191, Arg197, 267–270, and Lys341 each bind substrate; these read RD and RADR. Asp408, His412, Asp449, His450, and His468 together coordinate Mn(2+).

Belongs to the BPG-independent phosphoglycerate mutase family. Monomer. Mn(2+) is required as a cofactor.

It carries out the reaction (2R)-2-phosphoglycerate = (2R)-3-phosphoglycerate. It participates in carbohydrate degradation; glycolysis; pyruvate from D-glyceraldehyde 3-phosphate: step 3/5. Its function is as follows. Catalyzes the interconversion of 2-phosphoglycerate and 3-phosphoglycerate. The sequence is that of 2,3-bisphosphoglycerate-independent phosphoglycerate mutase from Coxiella burnetii (strain RSA 331 / Henzerling II).